The chain runs to 123 residues: ATP synthase epsilon chain (123 aa).

Belongs to the ATPase epsilon chain family. As to quaternary structure, F-type ATPases have 2 components, CF(1) - the catalytic core - and CF(0) - the membrane proton channel. CF(1) has five subunits: alpha(3), beta(3), gamma(1), delta(1), epsilon(1). CF(0) has three main subunits: a, b and c.

The protein localises to the cell inner membrane. Its function is as follows. Produces ATP from ADP in the presence of a proton gradient across the membrane. The polypeptide is ATP synthase epsilon chain (Helicobacter pylori (strain P12)).